The following is a 318-amino-acid chain: Dihydroorotate dehydrogenase B (NAD(+)), catalytic subunit (318 aa).

FMN-binding positions include Ser19 and 43–44 (KT). Substrate-binding positions include Lys43, 69-73 (NAMGL), and Asn125. Asn125 contributes to the FMN binding site. The active-site Nucleophile is the Cys128. FMN is bound by residues Lys164 and Val192. Residue 193–194 (NT) participates in substrate binding. Residues Gly219, 247-248 (GG), and 269-270 (AT) contribute to the FMN site.

Belongs to the dihydroorotate dehydrogenase family. Type 1 subfamily. In terms of assembly, heterotetramer of 2 PyrK and 2 PyrD type B subunits. It depends on FMN as a cofactor.

It localises to the cytoplasm. It carries out the reaction (S)-dihydroorotate + NAD(+) = orotate + NADH + H(+). Its pathway is pyrimidine metabolism; UMP biosynthesis via de novo pathway; orotate from (S)-dihydroorotate (NAD(+) route): step 1/1. Functionally, catalyzes the conversion of dihydroorotate to orotate with NAD(+) as electron acceptor. This chain is Dihydroorotate dehydrogenase B (NAD(+)), catalytic subunit (pyrD), found in Methanopyrus kandleri (strain AV19 / DSM 6324 / JCM 9639 / NBRC 100938).